Consider the following 362-residue polypeptide: DNA replication and repair protein RecF (362 aa).

30–37 (GPNGSGKT) contributes to the ATP binding site.

It belongs to the RecF family.

It is found in the cytoplasm. The RecF protein is involved in DNA metabolism; it is required for DNA replication and normal SOS inducibility. RecF binds preferentially to single-stranded, linear DNA. It also seems to bind ATP. This is DNA replication and repair protein RecF from Proteus mirabilis (strain HI4320).